The following is a 214-amino-acid chain: uncharacterized protein (214 aa).

Helical transmembrane passes span 10–30 (IPPLAVYLLVSGVVGVESLGI), 55–75 (IGVGVVAVIGAAVGDSIGYAI), 147–167 (VSGAICWAGGTTALVYFAGMA), and 174–194 (RFSWIALIITVVVGIIAAILL).

This sequence belongs to the DedA family.

It localises to the cell membrane. This is an uncharacterized protein from Mycobacterium leprae (strain TN).